Here is a 539-residue protein sequence, read N- to C-terminus: Probable protein kinase UbiB (539 aa).

The helical transmembrane segment at 23–43 threads the bilayer; the sequence is DLLFALPLPWWMLAVRFVLPW. The region spanning 125–492 is the Protein kinase domain; the sequence is RFDETPLASA…WHDRKDEPVL (368 aa). ATP is bound by residues 131–139 and Lys153; that span reads LASASVAQV. Asp288 (proton acceptor) is an active-site residue. Helical transmembrane passes span 494–514 and 517–537; these read LIGAALLVGGAIQGWVMSEAA and LLTLTAWPAAIMLIAGLYLIV.

The protein belongs to the ABC1 family. UbiB subfamily.

Its subcellular location is the cell inner membrane. The protein operates within cofactor biosynthesis; ubiquinone biosynthesis [regulation]. Its function is as follows. Is probably a protein kinase regulator of UbiI activity which is involved in aerobic coenzyme Q (ubiquinone) biosynthesis. This Pseudomonas syringae pv. tomato (strain ATCC BAA-871 / DC3000) protein is Probable protein kinase UbiB.